The chain runs to 285 residues: Iron uptake system component EfeM (285 aa).

The first 34 residues, 1-34 (MTYPLLTRKTLMKKTPLALLLTLGLLQTPLAAFA), serve as a signal peptide directing secretion.

The protein belongs to the EfeM/EfeO family. Component of the iron transporter efeUOB/M complex composed of EfeU, EfeM and EfeB.

It localises to the periplasm. Part of the iron transporter system efeUOB/M involved in iron import. Specifically binds Fe(3+), which is produced by EfeB-mediated oxidation of Fe(2+), and delivers it to the cell inner membrane permease EfeU. Also binds Zn(2+) and Cu(2+) in vitro. The chain is Iron uptake system component EfeM from Pseudomonas syringae pv. syringae (strain B728a).